The following is a 302-amino-acid chain: Putative beta-glucosidase 17 (302 aa).

The N-terminal stretch at Met-1 to Gly-27 is a signal peptide. A beta-D-glucoside contacts are provided by residues Gln-47, His-149, and Asn-194 to Glu-195. Glu-195 acts as the Proton donor in catalysis. Residues Cys-214 and Cys-221 are joined by a disulfide bond. Residue Asn-274 is glycosylated (N-linked (GlcNAc...) asparagine).

Belongs to the glycosyl hydrolase 1 family.

It carries out the reaction Hydrolysis of terminal, non-reducing beta-D-glucosyl residues with release of beta-D-glucose.. This is Putative beta-glucosidase 17 (BGLU17) from Oryza sativa subsp. japonica (Rice).